A 632-amino-acid chain; its full sequence is DNA mismatch repair protein MutL (632 aa).

The interval Glu-376–Gln-397 is disordered.

Belongs to the DNA mismatch repair MutL/HexB family.

This protein is involved in the repair of mismatches in DNA. It is required for dam-dependent methyl-directed DNA mismatch repair. May act as a 'molecular matchmaker', a protein that promotes the formation of a stable complex between two or more DNA-binding proteins in an ATP-dependent manner without itself being part of a final effector complex. This chain is DNA mismatch repair protein MutL, found in Pseudomonas entomophila (strain L48).